We begin with the raw amino-acid sequence, 580 residues long: MGWEYAQVHLKYTIPFGVVLAAVYRPLMSRLDVFKLVFLITVAVVSTIPWDSYLIKNRIWTYPPGVVVGLTAWDIPAEELFFFVIQTFNTSLLYMILSKPTFHPIYLSKKTGWGKIAGQILFASAIIFGLVSVSSGGEGMYMGLILIWACPFLLFLWSISYQFIVNLPWTNTALPIALPTLYLWVVDTFALRRGTWSITSGTKYGVVLWDGLEIEEAVFFLLTNTLIVFGLIACDNNLAILDTFPEHFPRTKGVPSLLTIIRTLILPKEKYDEERIQGLVSAVALLRKKSRSFYLASGTFEGRLRIDLIRLYAFCRAADDLVDEAPSVDDSRASIEKLRKFLDLAYEENQEEPSQRLREYVTSSIPEMFHMALLQLPTYYLPKQPLDDLLKGFDTDLLFDRKSGAFPIETTEDLDIYGSRVAGTVAELCNHLILYHTPEAVPEDIQREVVASGQEMGIALQYVNIARDIKTDAEIDRVYLPLSWLKEAQLTPEDVIQQPHGPTIEALRHKLLDRAFEKYNMAKGAIDKLPSEGKGPIRVAVESYMEIGRVLREKGPTMKKGRATVPKMRRIRVAWSALNK.

Transmembrane regions (helical) follow at residues 3–23 (WEYAQVHLKYTIPFGVVLAAV), 35–55 (KLVFLITVAVVSTIPWDSYLI), and 65–85 (GVVVGLTAWDIPAEELFFFVI). N89 carries an N-linked (GlcNAc...) asparagine glycan. A run of 4 helical transmembrane segments spans residues 116–136 (IAGQILFASAIIFGLVSVSSG), 139–159 (GMYMGLILIWACPFLLFLWSI), 171–191 (NTALPIALPTLYLWVVDTFAL), and 214–234 (IEEAVFFLLTNTLIVFGLIAC).

In the N-terminal section; belongs to the lycopene beta-cyclase family. This sequence in the C-terminal section; belongs to the phytoene/squalene synthase family.

The protein resides in the membrane. It carries out the reaction all-trans-lycopene = gamma-carotene. The enzyme catalyses gamma-carotene = all-trans-beta-carotene. The catalysed reaction is 2 (2E,6E,10E)-geranylgeranyl diphosphate = 15-cis-phytoene + 2 diphosphate. Its pathway is carotenoid biosynthesis; beta-carotene biosynthesis. It participates in carotenoid biosynthesis; phytoene biosynthesis; all-trans-phytoene from geranylgeranyl diphosphate: step 1/1. Functionally, bifunctional enzyme; part of the car gene cluster that mediates the biosynthesis of neurosporaxanthin, a carboxylic apocarotenoid acting as an essential protective pigments and leading to orange pigmentation. CarAR catalyzes the first step of the pathway by converting geranylgeranyl diphosphate to phytoene, as well as the later cyclization step that transforms the carB product lycopene into gamma-carotene. CarAR also converts part of gamma-carotene into beta-carotene. Neurosporaxanthin is synthesized from geranyl-geranyl pyrophosphate (GGPP) through several enzymatic activities. Phytoene synthase activity performed by the bifunctional enzyme carAR first produces phytoene from geranyl-geranyl pyrophosphate (GGPP). The phytoene dehydrogenase carB then introduces 4 desaturations to lead to lycopene which is substrate of the carotene cyclase activity of carAR that leads to the production of gamma-carotene. CarB then performs a 5th desaturation reaction to yield torulene. Torulene is the substrate of the dioxidase carT that breaks the molecule, removing five carbon atoms to yield beta-apo-4'-carotenal, whereas the aldehyde dehydrogenase carD mediates the last step by converting beta-apo-4'-carotenal into neurosporaxanthin. The sequence is that of Bifunctional lycopene cyclase/phytoene synthase from Gibberella fujikuroi (strain CBS 195.34 / IMI 58289 / NRRL A-6831) (Bakanae and foot rot disease fungus).